A 331-amino-acid chain; its full sequence is UPF0324 membrane protein SAR0338 (331 aa).

The next 11 membrane-spanning stretches (helical) occupy residues 9–26 (FMIG…SFLA), 31–48 (ILDK…AILY), 69–88 (LLRF…DIIG), 93–115 (LLAI…NKLL), 122–144 (ALLL…APIF), 154–176 (SIGI…YAIF), 183–202 (YGAW…LAGG), 217–234 (LGRV…ILIM), 247–269 (ISIP…VTIP), 273–295 (LNIL…GLNV), and 308–330 (LMTI…HWLY).

Belongs to the UPF0324 family.

It localises to the cell membrane. This chain is UPF0324 membrane protein SAR0338, found in Staphylococcus aureus (strain MRSA252).